The chain runs to 95 residues: UPF0223 protein Bsph_1378 (95 aa).

This sequence belongs to the UPF0223 family.

The chain is UPF0223 protein Bsph_1378 from Lysinibacillus sphaericus (strain C3-41).